The primary structure comprises 305 residues: Putative E3 ubiquitin-protein ligase SINAT1 (305 aa).

The RING-type zinc-finger motif lies at 57 to 93 (CPVCTNLMYPPIHQCPNGHTLCSSCKLRVQNTCPTCR). An SBD region spans residues 107–300 (VAESLEVPCR…EELKLRVTGR (194 aa)). An SIAH-type zinc finger spans residues 110–170 (SLEVPCRYQN…LVDHLKDDHK (61 aa)). The Zn(2+) site is built by Cys115, Cys122, His134, Cys138, Cys145, Cys152, His164, and His169.

The protein belongs to the SINA (Seven in absentia) family. In terms of assembly, interacts with SINAT6. Interacts with ATG6 and TRAF1A. Interacts with WAV3. Interacts with FREE1. Interacts with ELC/VPS23A.

It localises to the endosome. It is found in the multivesicular body. The protein resides in the cytoplasmic vesicle. Its subcellular location is the autophagosome. It carries out the reaction S-ubiquitinyl-[E2 ubiquitin-conjugating enzyme]-L-cysteine + [acceptor protein]-L-lysine = [E2 ubiquitin-conjugating enzyme]-L-cysteine + N(6)-ubiquitinyl-[acceptor protein]-L-lysine.. The protein operates within protein modification; protein ubiquitination. Its function is as follows. E3 ubiquitin-protein ligase that mediates ubiquitination and subsequent proteasomal degradation of target proteins. E3 ubiquitin ligases accept ubiquitin from an E2 ubiquitin-conjugating enzyme in the form of a thioester and then directly transfers the ubiquitin to targeted substrates. It probably triggers the ubiquitin-mediated degradation of different substrates. Mediates the proteasomal-dependent degradation of ATG6, a component of the autophagosome complex. Requires TRAF1A/MUSE14 and TRAF1B/MUSE13 to target ATG6 for ubiquitination and subsequent regulation of autophagosome assembly. Modulates directly the ubiquitination and proteasomal-dependent degradation of FREE1, a component of the ESCRT-I complex. Modulates directly the ubiquitination and proteasomal-dependent degradation of ELC/VPS23A, a component of the ESCRT-I complex. The protein is Putative E3 ubiquitin-protein ligase SINAT1 of Arabidopsis thaliana (Mouse-ear cress).